Reading from the N-terminus, the 199-residue chain is Protein ZNRD2 (199 aa).

N-acetylalanine is present on Ala2. Zn(2+) is bound by residues Cys53, Cys56, Cys70, and Cys73. Ser94 bears the Phosphoserine mark. The segment at 100–125 (QLASASELPLGSRPAPQPPVPRPEHC) is disordered. A Nuclear export signal motif is present at residues 173-194 (SLETSIQLCGLIRACAEALRSL).

Homodimer. Zn(2+) is required as a cofactor.

The protein resides in the cytoplasm. In terms of biological role, might play a role in mitosis. Antigenic molecule. Could be a centromere-associated protein. May induce anti-centromere antibodies. This Homo sapiens (Human) protein is Protein ZNRD2.